The sequence spans 836 residues: Glutamate receptor ionotropic, kainate glr-3 (836 aa).

Residues 1–19 form the signal peptide; sequence MFWIAKTLIAFLILLKTDC. Topologically, residues 20-523 are extracellular; the sequence is YKIAIPANLI…WFKFMDPLST (504 aa). Cysteine 76 and cysteine 320 are disulfide-bonded. 5 N-linked (GlcNAc...) asparagine glycosylation sites follow: asparagine 225, asparagine 257, asparagine 356, asparagine 391, and asparagine 419. Residues 478 to 480 and arginine 485 contribute to the L-glutamate site; that span reads SLT. A helical transmembrane segment spans residues 524-544; the sequence is QVWIMTFASYFVVSVAIWIIA. Residues 545 to 600 lie on the Cytoplasmic side of the membrane; the sequence is KISPYEQFERDEDNGQYKPVDNQFSLRNSFWFTVCSLMQQGSELCPRAASTRLLTG. The chain crosses the membrane as a helical span at residues 601 to 621; that stretch reads IWWFFALILISSYTANLAAVL. Topologically, residues 622–780 are extracellular; that stretch reads TTRRMETPIE…KRKDQDDGES (159 aa). L-glutamate is bound at residue 651 to 652; sequence ST. Asparagine 657 carries N-linked (GlcNAc...) asparagine glycosylation. Glutamate 699 provides a ligand contact to L-glutamate. A helical transmembrane segment spans residues 781 to 801; sequence IGGIFIILVVGLVLTAVLVIF. At 802 to 836 the chain is on the cytoplasmic side; sequence ELITTRKPSPAQSQVIRHVNVIPSFKLGFFRWNVN.

This sequence belongs to the glutamate-gated ion channel (TC 1.A.10.1) family. As to expression, expressed in the intestine and in the ASER neuron. Also expressed in the thermosensitive RIA interneuron.

It localises to the cell membrane. The protein localises to the postsynaptic cell membrane. Its activity is regulated as follows. Activated by low temperature of 18 degrees Celsius in ASER neuron. Ionotropic glutamate receptor. Activation by glutamate requires additional verification. L-glutamate acts as an excitatory neurotransmitter at many synapses in the central nervous system. Binding of the excitatory neurotransmitter L-glutamate induces a conformation change, leading to the opening of the cation channel, and thereby converts the chemical signal to an electrical impulse. The receptor then desensitizes rapidly and enters a transient inactive state, characterized by the presence of bound agonist. Functionally, independent of its ionotropic glutamate receptor activity, acts as a thermoreceptor in the ASER neuron where it triggers a calcium response to activate cold avoidance behavior in response to temperatures below 19 degrees Celsius. Possibly functions as a metabotropic cold receptor and acts upstream of the G(o) G protein goa-1 in the ASER neuron. Also functions in cold sensing in the intestine. This is Glutamate receptor ionotropic, kainate glr-3 from Caenorhabditis elegans.